Reading from the N-terminus, the 279-residue chain is 3-methyl-2-oxobutanoate hydroxymethyltransferase (279 aa).

Mg(2+) contacts are provided by Asp-43 and Asp-82. Residues Asp-43 to Ser-44, Asp-82, and Lys-112 contribute to the 3-methyl-2-oxobutanoate site. Glu-114 contributes to the Mg(2+) binding site. Residue Glu-181 is the Proton acceptor of the active site.

This sequence belongs to the PanB family. In terms of assembly, homodecamer; pentamer of dimers. It depends on Mg(2+) as a cofactor.

The protein localises to the cytoplasm. The catalysed reaction is 3-methyl-2-oxobutanoate + (6R)-5,10-methylene-5,6,7,8-tetrahydrofolate + H2O = 2-dehydropantoate + (6S)-5,6,7,8-tetrahydrofolate. Its pathway is cofactor biosynthesis; (R)-pantothenate biosynthesis; (R)-pantoate from 3-methyl-2-oxobutanoate: step 1/2. Functionally, catalyzes the reversible reaction in which hydroxymethyl group from 5,10-methylenetetrahydrofolate is transferred onto alpha-ketoisovalerate to form ketopantoate. In Bacillus anthracis (strain A0248), this protein is 3-methyl-2-oxobutanoate hydroxymethyltransferase.